We begin with the raw amino-acid sequence, 689 residues long: Glycine--tRNA ligase beta subunit (689 aa).

Belongs to the class-II aminoacyl-tRNA synthetase family. Tetramer of two alpha and two beta subunits.

The protein localises to the cytoplasm. The catalysed reaction is tRNA(Gly) + glycine + ATP = glycyl-tRNA(Gly) + AMP + diphosphate. The polypeptide is Glycine--tRNA ligase beta subunit (Serratia proteamaculans (strain 568)).